The primary structure comprises 288 residues: Nucleotide-binding protein ASA_0318 (288 aa).

8-15 is an ATP binding site; that stretch reads GRSGSGKT. Residue 56–59 participates in GTP binding; sequence DVRN.

It belongs to the RapZ-like family.

Functionally, displays ATPase and GTPase activities. The protein is Nucleotide-binding protein ASA_0318 of Aeromonas salmonicida (strain A449).